Consider the following 210-residue polypeptide: Cytochrome c oxidase subunit 2 (210 aa).

The Mitochondrial intermembrane portion of the chain corresponds to 1 to 20 (MAFILSFWMIFLLDSVIVLL). The helical transmembrane segment at 21–42 (SFVCFVCVWICALLFSTVLLVS) threads the bilayer. The Mitochondrial matrix segment spans residues 43–60 (KLNNIYCTWDFTASKFID). A helical membrane pass occupies residues 61–86 (VYWFTIGGMFSLGLLLRLCLLLYFGH). At 87–210 (LNFVSFDLCK…GFMPIVICFI (124 aa)) the chain is on the mitochondrial intermembrane side. Residues His157, Cys192, Glu194, Cys196, His200, and Met203 each coordinate Cu cation. Glu194 serves as a coordination point for Mg(2+).

The protein belongs to the cytochrome c oxidase subunit 2 family. As to quaternary structure, component of the cytochrome c oxidase (complex IV, CIV), a multisubunit enzyme composed of a catalytic core of 3 subunits and several supernumerary subunits. The complex exists as a monomer or a dimer and forms supercomplexes (SCs) in the inner mitochondrial membrane with ubiquinol-cytochrome c oxidoreductase (cytochrome b-c1 complex, complex III, CIII). It depends on Cu cation as a cofactor.

It localises to the mitochondrion inner membrane. The catalysed reaction is 4 Fe(II)-[cytochrome c] + O2 + 8 H(+)(in) = 4 Fe(III)-[cytochrome c] + 2 H2O + 4 H(+)(out). Functionally, component of the cytochrome c oxidase, the last enzyme in the mitochondrial electron transport chain which drives oxidative phosphorylation. The respiratory chain contains 3 multisubunit complexes succinate dehydrogenase (complex II, CII), ubiquinol-cytochrome c oxidoreductase (cytochrome b-c1 complex, complex III, CIII) and cytochrome c oxidase (complex IV, CIV), that cooperate to transfer electrons derived from NADH and succinate to molecular oxygen, creating an electrochemical gradient over the inner membrane that drives transmembrane transport and the ATP synthase. Cytochrome c oxidase is the component of the respiratory chain that catalyzes the reduction of oxygen to water. Electrons originating from reduced cytochrome c in the intermembrane space (IMS) are transferred via the dinuclear copper A center (CU(A)) of subunit 2 and heme A of subunit 1 to the active site in subunit 1, a binuclear center (BNC) formed by heme A3 and copper B (CU(B)). The BNC reduces molecular oxygen to 2 water molecules using 4 electrons from cytochrome c in the IMS and 4 protons from the mitochondrial matrix. This Leishmania tarentolae (Sauroleishmania tarentolae) protein is Cytochrome c oxidase subunit 2.